A 309-amino-acid polypeptide reads, in one-letter code: Probable manganese-dependent inorganic pyrophosphatase (309 aa).

The Mn(2+) site is built by His9, Asp13, Asp15, Asp75, His97, and Asp149.

Belongs to the PPase class C family. It depends on Mn(2+) as a cofactor.

The protein resides in the cytoplasm. It catalyses the reaction diphosphate + H2O = 2 phosphate + H(+). The polypeptide is Probable manganese-dependent inorganic pyrophosphatase (Staphylococcus aureus (strain COL)).